A 408-amino-acid chain; its full sequence is LL-diaminopimelate aminotransferase (408 aa).

Substrate-binding residues include Tyr15 and Gly42. Pyridoxal 5'-phosphate is bound by residues Tyr72, 108-109, Tyr132, Asn187, Tyr218, and 246-248; these read SK and SFS. 3 residues coordinate substrate: Lys109, Tyr132, and Asn187. Lys249 is modified (N6-(pyridoxal phosphate)lysine). The pyridoxal 5'-phosphate site is built by Arg257 and Asn291. The substrate site is built by Asn291 and Arg387.

Belongs to the class-I pyridoxal-phosphate-dependent aminotransferase family. LL-diaminopimelate aminotransferase subfamily. Homodimer. It depends on pyridoxal 5'-phosphate as a cofactor.

It catalyses the reaction (2S,6S)-2,6-diaminopimelate + 2-oxoglutarate = (S)-2,3,4,5-tetrahydrodipicolinate + L-glutamate + H2O + H(+). The protein operates within amino-acid biosynthesis; L-lysine biosynthesis via DAP pathway; LL-2,6-diaminopimelate from (S)-tetrahydrodipicolinate (aminotransferase route): step 1/1. Involved in the synthesis of meso-diaminopimelate (m-DAP or DL-DAP), required for both lysine and peptidoglycan biosynthesis. Catalyzes the direct conversion of tetrahydrodipicolinate to LL-diaminopimelate. This chain is LL-diaminopimelate aminotransferase, found in Prochlorococcus marinus (strain NATL2A).